We begin with the raw amino-acid sequence, 161 residues long: Thy-1 membrane glycoprotein (161 aa).

Residues M1–G19 form the signal peptide. At Q20 the chain carries Pyrrolidone carboxylic acid. In terms of domain architecture, Ig-like V-type spans Q20–K126. Disulfide bonds link C28–C130 and C38–C104. Residues N42 and N79 are each glycosylated (N-linked (GlcNAc...) asparagine). At S82 the chain carries Phosphoserine. Residue N119 is glycosylated (N-linked (GlcNAc...) asparagine). C130 is lipidated: GPI-anchor amidated cysteine; alternate. Residues E131–L161 constitute a propeptide, removed in mature form. The N-linked (GlcNAc...) asparagine glycan is linked to N139.

It localises to the cell membrane. Its function is as follows. May play a role in cell-cell or cell-ligand interactions during synaptogenesis and other events in the brain. In Macaca mulatta (Rhesus macaque), this protein is Thy-1 membrane glycoprotein (THY1).